The primary structure comprises 242 residues: Ribonuclease 3 (242 aa).

The region spanning 14–142 (LRRFAARFAL…VIGALYLSTG (129 aa)) is the RNase III domain. Glu-56 contributes to the Mg(2+) binding site. Residue Asp-60 is part of the active site. 2 residues coordinate Mg(2+): Asp-128 and Glu-131. Glu-131 is a catalytic residue. Positions 170-235 (NHKSALQELT…ARGAYAALRS (66 aa)) constitute a DRBM domain.

Belongs to the ribonuclease III family. As to quaternary structure, homodimer. Mg(2+) is required as a cofactor.

It localises to the cytoplasm. The enzyme catalyses Endonucleolytic cleavage to 5'-phosphomonoester.. In terms of biological role, digests double-stranded RNA. Involved in the processing of primary rRNA transcript to yield the immediate precursors to the large and small rRNAs (23S and 16S). Processes some mRNAs, and tRNAs when they are encoded in the rRNA operon. Processes pre-crRNA and tracrRNA of type II CRISPR loci if present in the organism. This chain is Ribonuclease 3, found in Gloeobacter violaceus (strain ATCC 29082 / PCC 7421).